A 150-amino-acid polypeptide reads, in one-letter code: UPF0208 membrane protein VP2081 (150 aa).

A run of 2 helical transmembrane segments spans residues 42 to 62 and 70 to 90; these read FGIK…MAFN and SIVV…WLGA.

It belongs to the UPF0208 family.

The protein localises to the cell inner membrane. The chain is UPF0208 membrane protein VP2081 from Vibrio parahaemolyticus serotype O3:K6 (strain RIMD 2210633).